The sequence spans 237 residues: Large ribosomal subunit protein uL1 (237 aa).

The protein belongs to the universal ribosomal protein uL1 family. As to quaternary structure, part of the 50S ribosomal subunit.

Binds directly to 23S rRNA. The L1 stalk is quite mobile in the ribosome, and is involved in E site tRNA release. In terms of biological role, protein L1 is also a translational repressor protein, it controls the translation of the L11 operon by binding to its mRNA. This chain is Large ribosomal subunit protein uL1, found in Nocardia farcinica (strain IFM 10152).